An 807-amino-acid polypeptide reads, in one-letter code: Hyaluronate lyase (807 aa).

A signal peptide spans 1-40; the sequence is MTYRIKKWQKLSTITLLMAGVITLNGGEFRSVDKHQIAVA. Catalysis depends on residues N241, H297, and Y306.

Belongs to the polysaccharide lyase 8 family.

The protein localises to the secreted. It catalyses the reaction [hyaluronan](n) = n 3-(4-deoxy-beta-D-gluc-4-enuronosyl)-N-acetyl-D-glucosamine + H2O. The polypeptide is Hyaluronate lyase (Staphylococcus aureus (strain NCTC 8325 / PS 47)).